The chain runs to 286 residues: Bifunctional protein FolD (286 aa).

Residues 165 to 167 (GRS) and S190 contribute to the NADP(+) site.

Belongs to the tetrahydrofolate dehydrogenase/cyclohydrolase family. As to quaternary structure, homodimer.

It carries out the reaction (6R)-5,10-methylene-5,6,7,8-tetrahydrofolate + NADP(+) = (6R)-5,10-methenyltetrahydrofolate + NADPH. It catalyses the reaction (6R)-5,10-methenyltetrahydrofolate + H2O = (6R)-10-formyltetrahydrofolate + H(+). It participates in one-carbon metabolism; tetrahydrofolate interconversion. Catalyzes the oxidation of 5,10-methylenetetrahydrofolate to 5,10-methenyltetrahydrofolate and then the hydrolysis of 5,10-methenyltetrahydrofolate to 10-formyltetrahydrofolate. This Burkholderia orbicola (strain MC0-3) protein is Bifunctional protein FolD.